We begin with the raw amino-acid sequence, 77 residues long: UPF0401 protein ECP_3853 (77 aa).

This sequence belongs to the UPF0401 family.

The sequence is that of UPF0401 protein ECP_3853 from Escherichia coli O6:K15:H31 (strain 536 / UPEC).